We begin with the raw amino-acid sequence, 722 residues long: A-type ATP synthase subunit I (722 aa).

Positions 309–321 are enriched in basic and acidic residues; that stretch reads DYKPTGHDQHVPA. The disordered stretch occupies residues 309–352; the sequence is DYKPTGHDQHVPADDGADAATDGGTTASFDETDSPPVIQDNPGP. Residues 326-335 are compositionally biased toward low complexity; it reads DAATDGGTTA. The next 8 helical transmembrane spans lie at 384 to 404, 419 to 439, 474 to 494, 505 to 525, 554 to 574, 590 to 610, 639 to 659, and 662 to 682; these read FYGF…LGFW, GVAM…GEVF, LAAS…FGFV, AALE…WLFS, LAAA…AGFL, IAAV…LVFG, FMLF…MHMG, and GILI…ALGV.

This sequence belongs to the V-ATPase 116 kDa subunit family. Has multiple subunits with at least A(3), B(3), C, D, E, F, H, I and proteolipid K(x).

Its subcellular location is the cell membrane. In terms of biological role, component of the A-type ATP synthase that produces ATP from ADP in the presence of a proton gradient across the membrane. In Halobacterium salinarum (strain ATCC 700922 / JCM 11081 / NRC-1) (Halobacterium halobium), this protein is A-type ATP synthase subunit I.